A 907-amino-acid polypeptide reads, in one-letter code: Valine--tRNA ligase (907 aa).

A 'HIGH' region motif is present at residues 45–55 (PNVTGSLHMGH). Positions 554–558 (KMSKS) match the 'KMSKS' region motif. ATP is bound at residue K557. Residues 838-870 (GQLIDLEAERARLVKNVSKIEQDIEKISVKLNN) are a coiled coil.

Belongs to the class-I aminoacyl-tRNA synthetase family. ValS type 1 subfamily. As to quaternary structure, monomer.

The protein resides in the cytoplasm. It catalyses the reaction tRNA(Val) + L-valine + ATP = L-valyl-tRNA(Val) + AMP + diphosphate. Its function is as follows. Catalyzes the attachment of valine to tRNA(Val). As ValRS can inadvertently accommodate and process structurally similar amino acids such as threonine, to avoid such errors, it has a 'posttransfer' editing activity that hydrolyzes mischarged Thr-tRNA(Val) in a tRNA-dependent manner. This chain is Valine--tRNA ligase, found in Bartonella quintana (strain Toulouse) (Rochalimaea quintana).